The primary structure comprises 981 residues: Ubiquitin carboxyl-terminal hydrolase 37 (981 aa).

A KEN box 1 motif is present at residues 32–34 (KEN). Short sequence motifs (D-box) lie at residues 71–79 (RLMLTLQDN) and 96–105 (RLFLDAVHQN). The disordered stretch occupies residues 111–308 (MKPSQGSGSF…SAKRSLGFLP (198 aa)). Ser114 is subject to Phosphoserine. Positions 135 to 148 (RQLSYSDNQASSKR) are enriched in polar residues. A compositionally biased stretch (basic and acidic residues) spans 149 to 159 (GSLETKDDIPF). Residues 160-168 (RKVLGNPGR) carry the D-box 3 motif. Ser170 bears the Phosphoserine mark. A compositionally biased stretch (polar residues) spans 172-195 (KTATGSGITVTRTIPSLTSASTPL). Ser212 bears the Phosphoserine mark. The short motif at 223–225 (KEN) is the KEN box 2 element. Over residues 245-259 (SREKQLSLKQSEENR) the composition is skewed to basic and acidic residues. Residues 266-300 (LQSSSFYGSRTGSKDYSSGSTNLDRTNVSGQTPSA) show a composition bias toward polar residues. The USP domain maps to 343 to 953 (QGFSNLGNTC…SGYIFFYMHK (611 aa)). The active-site Nucleophile is Cys352. Ser630 carries the phosphoserine; by CDK2 modification. Residues Ser652 and Ser654 each carry the phosphoserine modification. Disordered stretches follow at residues 673 to 704 (GCEQ…GFDG) and 719 to 831 (KREA…EQKE). Composition is skewed to basic and acidic residues over residues 683 to 697 (KDSK…KSEL) and 719 to 734 (KREA…DDKP). In terms of domain architecture, UIM 1 spans 706–725 (SEEELLAAVLEMSKREASPT). Residue Ser772 is modified to Phosphoserine. Basic and acidic residues predominate over residues 776-788 (ITKDCDENKENKT). The KEN box 3 motif lies at 784–786 (KEN). 2 UIM domains span residues 808-827 (REEQ…QEAW) and 830-849 (KEDD…FNNS). Residues 813–824 (LQQALAQSLQEQ) are compositionally biased toward low complexity. His908 (proton acceptor) is an active-site residue.

The protein belongs to the peptidase C19 family. Interacts with FZR1/CDH1. Interacts with CDT1. In terms of processing, polyubiquitinated via 'Lys-11'-linked ubiquitin by the APC(CDH1) complex during late mitosis, leading to its degradation. Able to mediate auto-deubiquitination. Post-translationally, phosphorylated at Ser-630 by CDK2 during G1/S phase but not during mitosis; phosphorylation at Ser-630 is required for deubiquitinase activity. Also polyubiquitinated during early G1 phase, without leading to degradation. Phosphorylated at Ser-114 by ATM following DNA damage, which in turn increases its deubiquitination activity towards BLM.

Its subcellular location is the nucleus. The protein localises to the chromosome. It catalyses the reaction Thiol-dependent hydrolysis of ester, thioester, amide, peptide and isopeptide bonds formed by the C-terminal Gly of ubiquitin (a 76-residue protein attached to proteins as an intracellular targeting signal).. Its function is as follows. Deubiquitinase that plays a role in different processes including cell cycle regulation, DNA replication or DNA damage response. Antagonizes the anaphase-promoting complex (APC/C) during G1/S transition by mediating deubiquitination of cyclin-A (CCNA1 and CCNA2), thereby promoting S phase entry. Specifically mediates deubiquitination of 'Lys-11'-linked polyubiquitin chains, a specific ubiquitin-linkage type mediated by the APC/C complex. Phosphorylation at Ser-628 during G1/S phase maximizes the deubiquitinase activity, leading to prevent degradation of cyclin-A (CCNA1 and CCNA2). Plays an important role in the regulation of DNA replication by stabilizing the licensing factor CDT1. Also plays an essential role beyond S-phase entry to promote the efficiency and fidelity of replication by deubiquitinating checkpoint kinase 1/CHK1, promoting its stability. Sustains the DNA damage response (DDR) by deubiquitinating and stabilizing the ATP-dependent DNA helicase BLM. Mechanistically, DNA double-strand breaks (DSB) promotes ATM-mediated phosphorylation of USP37 and enhances the binding between USP37 and BLM. Promotes cell migration by deubiquitinating and stabilizing the epithelial-mesenchymal transition (EMT)-inducing transcription factor SNAI. Plays a role in the regulation of mitotic spindle assembly and mitotic progression by associating with chromatin-associated WAPL and stabilizing it through deubiquitination. This Canis lupus familiaris (Dog) protein is Ubiquitin carboxyl-terminal hydrolase 37 (USP37).